The primary structure comprises 315 residues: tRNA dimethylallyltransferase (315 aa).

An ATP-binding site is contributed by 9–16 (GPTASGKT). 11–16 (TASGKT) is a binding site for substrate. Interaction with substrate tRNA regions lie at residues 34-37 (DSLL) and 158-162 (QRIQR).

The protein belongs to the IPP transferase family. As to quaternary structure, monomer. Requires Mg(2+) as cofactor.

It carries out the reaction adenosine(37) in tRNA + dimethylallyl diphosphate = N(6)-dimethylallyladenosine(37) in tRNA + diphosphate. Its function is as follows. Catalyzes the transfer of a dimethylallyl group onto the adenine at position 37 in tRNAs that read codons beginning with uridine, leading to the formation of N6-(dimethylallyl)adenosine (i(6)A). The sequence is that of tRNA dimethylallyltransferase from Acidithiobacillus ferrooxidans (strain ATCC 53993 / BNL-5-31) (Leptospirillum ferrooxidans (ATCC 53993)).